The chain runs to 579 residues: Protein SSH4 (579 aa).

Residues 1 to 44 (MYVTFNEALDSSFGNLESPNHDFKVGDPNMVPTPPMDSDSAAIS) lie on the Cytoplasmic side of the membrane. A helical; Signal-anchor for type II membrane protein transmembrane segment spans residues 45 to 65 (LAFLISLSITFAILMLILVVI). The Lumenal portion of the chain corresponds to 66–579 (AAYVTFCGDD…SSKKKNRSRK (514 aa)). Residues 166 to 364 (DQQFIKDRGI…DNVSFREALS (199 aa)) enclose the B30.2/SPRY domain. N-linked (GlcNAc...) asparagine glycans are attached at residues Asn-212 and Asn-356. Phosphoserine is present on Ser-358. A Glycyl lysine isopeptide (Lys-Gly) (interchain with G-Cter in ubiquitin) cross-link involves residue Lys-367. N-linked (GlcNAc...) asparagine glycosylation is found at Asn-430 and Asn-507. The disordered stretch occupies residues 499–579 (HDSLETDDNN…SSKKKNRSRK (81 aa)). Positions 509 to 525 (TDNNVNNNDENAGCNEN) are enriched in low complexity. The span at 555-579 (PRNKSTKKRQRNRGKSSKKKNRSRK) shows a compositional bias: basic residues. N-linked (GlcNAc...) asparagine glycosylation is found at Asn-557 and Asn-575.

This sequence belongs to the SSH4 family.

It localises to the vacuole membrane. The protein resides in the endosome membrane. Functionally, components of the endosome-vacuole trafficking pathway that regulates nutrient transport. May be involved in processes which determine whether plasma membrane proteins are degraded or routed to the plasma membrane. Confers leflunomide resistance when overexpressed. The polypeptide is Protein SSH4 (SSH4) (Saccharomyces cerevisiae (strain YJM789) (Baker's yeast)).